Here is a 175-residue protein sequence, read N- to C-terminus: Large ribosomal subunit protein bL17 (175 aa).

The segment at 124 to 175 is disordered; the sequence is VKKSKPTAPAQAVATKPAVEETREAAAAQPQEPEVEISEVKDPAEECEAKAD. Basic and acidic residues predominate over residues 161-175; that stretch reads SEVKDPAEECEAKAD.

Belongs to the bacterial ribosomal protein bL17 family. Part of the 50S ribosomal subunit. Contacts protein L32.

This Geobacter sulfurreducens (strain ATCC 51573 / DSM 12127 / PCA) protein is Large ribosomal subunit protein bL17.